The following is a 68-amino-acid chain: Metallothionein-3 (68 aa).

N-acetylmethionine is present on Met-1. Residues 1 to 30 (MDPETCPCPSGGSCTCADSCKCEGCKCTSC) are beta. 9 residues coordinate a divalent metal cation: Cys-6, Cys-8, Cys-14, Cys-16, Cys-20, Cys-22, Cys-25, Cys-27, and Cys-30. Residues 31 to 68 (KKSCCSCCPAECEKCAKDCVCKGGEAAEAEAEKCSCCQ) are alpha. A Phosphoserine modification is found at Ser-33. A divalent metal cation is bound by residues Cys-34, Cys-35, Cys-37, Cys-38, Cys-42, Cys-45, Cys-49, Cys-51, Cys-64, Cys-66, and Cys-67.

The protein belongs to the metallothionein superfamily. Type 1 family. As to expression, abundant in a subset of astrocytes in the normal human brain, but greatly reduced in the Alzheimer disease (AD) brain.

Functionally, binds heavy metals. Contains three zinc and three copper atoms per polypeptide chain and only a negligible amount of cadmium. Inhibits survival and neurite formation of cortical neurons in vitro. This chain is Metallothionein-3 (MT3), found in Homo sapiens (Human).